Here is a 345-residue protein sequence, read N- to C-terminus: Phosphoribosylformylglycinamidine cyclo-ligase (345 aa).

This sequence belongs to the AIR synthase family.

The protein resides in the cytoplasm. The catalysed reaction is 2-formamido-N(1)-(5-O-phospho-beta-D-ribosyl)acetamidine + ATP = 5-amino-1-(5-phospho-beta-D-ribosyl)imidazole + ADP + phosphate + H(+). The protein operates within purine metabolism; IMP biosynthesis via de novo pathway; 5-amino-1-(5-phospho-D-ribosyl)imidazole from N(2)-formyl-N(1)-(5-phospho-D-ribosyl)glycinamide: step 2/2. This is Phosphoribosylformylglycinamidine cyclo-ligase from Limosilactobacillus reuteri (strain DSM 20016) (Lactobacillus reuteri).